The chain runs to 660 residues: MTITRHARIDWDEQGNPRSHDFSDVYFSTESGLDETRHVFLVQNDLRRRFTELPVGGRLIVGETGFGTGLNFLCAWQLFDECAPVDARLHFVSVEKYPLSQGDLQRALVLWPELSRFADQLLGQYVAIHEGFQRLVFDNGRVTLTLLIGDALQMLPQLDGQIDAWFLDGFAPAKNPDMWTPELFAELARLSTPSTTIGTFTSTGWVRRSLNAAGFKMKRVPGIGHKWEVLRGAFIAWPEGVTSVPAAKPWFARPTPLAGERKALAIGAGLAGCATAQSLAQRGWQVSLLERHAAPAQEASGNPQGVLYLKLSAHGTALSQLILSGFGHTRRQLERLQRGVEWDACGVLQLTFDDKEAQRQKQLAEAFPESLLHLLDRRAAEVQSGIALNSGGLFYPEGGWVHPPALCHAQIQHANIRLIAHHQALELRRVDDQWQVWSDAQLIDSAPVVVLAGAADIKQFSQSAELPLKRIRGQITSLPQTGASAALRTVVCAEGYVAPARLGEHTLGASFDFNSVDLTPNVADHLGNLTLLQEISADLASRLEAADRPPEQLRGRAAFRCTSPDYLPIVGPLADREAFVQAYAALGKDARQVPDIACPWLDGLYVNSGHGSRGLITAPLCAELIAAWLDNEPLPLPRSVAEACHPNRFALRGLIRGGGK.

A tRNA (mnm(5)s(2)U34)-methyltransferase region spans residues 1–235 (MTITRHARID…KWEVLRGAFI (235 aa)). The tract at residues 266-660 (IGAGLAGCAT…LRGLIRGGGK (395 aa)) is FAD-dependent cmnm(5)s(2)U34 oxidoreductase.

It in the N-terminal section; belongs to the methyltransferase superfamily. tRNA (mnm(5)s(2)U34)-methyltransferase family. The protein in the C-terminal section; belongs to the DAO family. The cofactor is FAD.

The protein localises to the cytoplasm. It carries out the reaction 5-aminomethyl-2-thiouridine(34) in tRNA + S-adenosyl-L-methionine = 5-methylaminomethyl-2-thiouridine(34) in tRNA + S-adenosyl-L-homocysteine + H(+). In terms of biological role, catalyzes the last two steps in the biosynthesis of 5-methylaminomethyl-2-thiouridine (mnm(5)s(2)U) at the wobble position (U34) in tRNA. Catalyzes the FAD-dependent demodification of cmnm(5)s(2)U34 to nm(5)s(2)U34, followed by the transfer of a methyl group from S-adenosyl-L-methionine to nm(5)s(2)U34, to form mnm(5)s(2)U34. This is tRNA 5-methylaminomethyl-2-thiouridine biosynthesis bifunctional protein MnmC from Pseudomonas syringae pv. tomato (strain ATCC BAA-871 / DC3000).